Reading from the N-terminus, the 352-residue chain is V-type ATP synthase subunit C (352 aa).

The protein belongs to the V-ATPase V0D/AC39 subunit family.

Its function is as follows. Produces ATP from ADP in the presence of a proton gradient across the membrane. The chain is V-type ATP synthase subunit C (atpC) from Deinococcus radiodurans (strain ATCC 13939 / DSM 20539 / JCM 16871 / CCUG 27074 / LMG 4051 / NBRC 15346 / NCIMB 9279 / VKM B-1422 / R1).